The primary structure comprises 954 residues: MTQKLQMADRFDASAVEQALYNHWEQKGYFKPSYDAGRPSYSIAIPPPNVTGSLHMGHAFQQTLMDTLIRYHRMQGDNTLWQAGTDHAGIATQMVVERKIAAEENKTRHDYGREAFIEKIWDWKAYSGGTISQQMRRLGNSIDWERERFTMDEGLSEAVKEVFVRLHEEGLIYRGKRLVNWDPKLHTAISDLEVENKESKGSLWHFRYPLAKGAKTAEGLDYLVVATTRPETVLGDTAVAVHPEDERYQSLIGKTVVLPLANREIPIVADEYVDREFGTGVVKITPAHDFNDYEVGKRHNLPMVNVMTFNADIREEAEIIGTDGQPLTTYEAEIPQDYRGLERFAARKKVVADFDSLGLLEKIQPHDLKVPYGDRGGVPIEPMLTDQWYVSVKPLAETAIKAVEEGEIQFVPKQYENLYYSWMRDIQDWCISRQLWWGHRIPAWYDEQGNVYVGRSEEEVRSKNGLNSSVALRQDEDVLDTWFSSALWTFSTLGWPQQTKELAMFHPTNVLITGFDIIFFWVARMIMMTMHFIKDENGKPQVPFKTVYVTGLIRDEQGQKMSKSKGNVIDPLDMIDGIDLESLLAKRTGNMMQPQLAEKIAKATKKEFPEGIQPHGTDALRFTLSALASTGRDINWDMKRLEGYRNFCNKLWNASRFVLTNDKLDLSTGERELSLADKWIQAEFNKTVQNFRNALDQYRFDLAATELYEFTWNQFCDWYLELTKPVFANGTDAQIRAASFTLVNVLEKLLRLAHPLIPFITEEIWQKVKDFAGVEGETIMTQPFPAFDEALVNDEAVAQISWIKEVITAVRNIRAESNIAPSKGLDLLLRNLPDTEQKTLENNRTLMQIMAKLDSVKVLAQDEEAPLSVAKLVGSAELLVPMAGFINKDTELARLNKEIEKLIGEVKRIEGKLGNEAFVAKAPEAVIAKEREKMQDYQEGLEKLRAQYLSIENL.

The 'HIGH' region motif lies at 48–58 (PNVTGSLHMGH). The short motif at 560 to 564 (KMSKS) is the 'KMSKS' region element. K563 lines the ATP pocket. Residues 886 to 954 (INKDTELARL…RAQYLSIENL (69 aa)) adopt a coiled-coil conformation.

This sequence belongs to the class-I aminoacyl-tRNA synthetase family. ValS type 1 subfamily. As to quaternary structure, monomer.

The protein resides in the cytoplasm. The enzyme catalyses tRNA(Val) + L-valine + ATP = L-valyl-tRNA(Val) + AMP + diphosphate. Functionally, catalyzes the attachment of valine to tRNA(Val). As ValRS can inadvertently accommodate and process structurally similar amino acids such as threonine, to avoid such errors, it has a 'posttransfer' editing activity that hydrolyzes mischarged Thr-tRNA(Val) in a tRNA-dependent manner. The chain is Valine--tRNA ligase from Mannheimia succiniciproducens (strain KCTC 0769BP / MBEL55E).